The sequence spans 369 residues: MTKNLYLGVMSGTSLDGVDLCVMDFAKNPPKLTACGFTPMPEDLRTDLSHLLKSRETSLQKLGEIDHRLGLLYAESIKRFLAEHHLSASDIQAIGCHGQTVWHSPNGNFPFTMQIGDMNLVAAHTGITTIADFRRKDMAVGGQGAPLVPAFHEGIFASQERLTVVLNIGGISNISVLTPQQPTIGYDVSVGNALMDSWIELHQAKRYDKNAEWAKTGKLIPTLLDSLLDEPFFKLPAPKSTGRELFNLEWLAKKSANLTAYRPEDVQRTLAEFTAQSVVNELKTLESEKQCLLLVCGGGARNPLLMQRFSELLPKWQVATTDEYGLDIDYVEAAAFAWLAYQRVHNLTSNLPSVTGAKQPVSLGVIYPK.

12–19 (GTSLDGVD) lines the ATP pocket.

This sequence belongs to the anhydro-N-acetylmuramic acid kinase family.

The catalysed reaction is 1,6-anhydro-N-acetyl-beta-muramate + ATP + H2O = N-acetyl-D-muramate 6-phosphate + ADP + H(+). It functions in the pathway amino-sugar metabolism; 1,6-anhydro-N-acetylmuramate degradation. The protein operates within cell wall biogenesis; peptidoglycan recycling. In terms of biological role, catalyzes the specific phosphorylation of 1,6-anhydro-N-acetylmuramic acid (anhMurNAc) with the simultaneous cleavage of the 1,6-anhydro ring, generating MurNAc-6-P. Is required for the utilization of anhMurNAc either imported from the medium or derived from its own cell wall murein, and thus plays a role in cell wall recycling. The polypeptide is Anhydro-N-acetylmuramic acid kinase (Actinobacillus pleuropneumoniae serotype 7 (strain AP76)).